Consider the following 297-residue polypeptide: 33 kDa chaperonin (297 aa).

Disulfide bonds link Cys-232–Cys-234 and Cys-266–Cys-269.

This sequence belongs to the HSP33 family. Under oxidizing conditions two disulfide bonds are formed involving the reactive cysteines. Under reducing conditions zinc is bound to the reactive cysteines and the protein is inactive.

It localises to the cytoplasm. Redox regulated molecular chaperone. Protects both thermally unfolding and oxidatively damaged proteins from irreversible aggregation. Plays an important role in the bacterial defense system toward oxidative stress. The protein is 33 kDa chaperonin of Pseudomonas aeruginosa (strain UCBPP-PA14).